We begin with the raw amino-acid sequence, 294 residues long: Syntaxin-19 (294 aa).

Residues 209–271 (LSEIEQRHKE…NNTKEKFGLA (63 aa)) enclose the t-SNARE coiled-coil homology domain.

This sequence belongs to the syntaxin family. Interacts with EGFR.

The protein resides in the cell membrane. The protein localises to the cytoplasm. Plays a role in endosomal trafficking of the epidermal growth factor receptor (EGFR). The protein is Syntaxin-19 (STX19) of Homo sapiens (Human).